A 403-amino-acid chain; its full sequence is Phosphopentomutase (403 aa).

Asp-13, Asp-298, His-303, Asp-339, His-340, and His-351 together coordinate Mn(2+).

This sequence belongs to the phosphopentomutase family. The cofactor is Mn(2+).

It localises to the cytoplasm. It catalyses the reaction 2-deoxy-alpha-D-ribose 1-phosphate = 2-deoxy-D-ribose 5-phosphate. The catalysed reaction is alpha-D-ribose 1-phosphate = D-ribose 5-phosphate. Its pathway is carbohydrate degradation; 2-deoxy-D-ribose 1-phosphate degradation; D-glyceraldehyde 3-phosphate and acetaldehyde from 2-deoxy-alpha-D-ribose 1-phosphate: step 1/2. In terms of biological role, isomerase that catalyzes the conversion of deoxy-ribose 1-phosphate (dRib-1-P) and ribose 1-phosphate (Rib-1-P) to deoxy-ribose 5-phosphate (dRib-5-P) and ribose 5-phosphate (Rib-5-P), respectively. The chain is Phosphopentomutase from Streptococcus thermophilus (strain ATCC BAA-491 / LMD-9).